Reading from the N-terminus, the 265-residue chain is tRNA pseudouridine synthase A (265 aa).

D52 functions as the Nucleophile in the catalytic mechanism. Y112 is a substrate binding site.

The protein belongs to the tRNA pseudouridine synthase TruA family. Homodimer.

The enzyme catalyses uridine(38/39/40) in tRNA = pseudouridine(38/39/40) in tRNA. Its function is as follows. Formation of pseudouridine at positions 38, 39 and 40 in the anticodon stem and loop of transfer RNAs. This Akkermansia muciniphila (strain ATCC BAA-835 / DSM 22959 / JCM 33894 / BCRC 81048 / CCUG 64013 / CIP 107961 / Muc) protein is tRNA pseudouridine synthase A.